A 370-amino-acid polypeptide reads, in one-letter code: Ni-sirohydrochlorin a,c-diamide reductive cyclase complex, component CfbD (370 aa).

This sequence belongs to the NifD/NifK/NifE/NifN family. Homodimer or monomer. The Ni-sirohydrochlorin a,c-diamide reductive cyclase complex is composed of a NifH homolog component CfbC and a NifD homolog component CfbD. The cofactor is [4Fe-4S] cluster.

The enzyme catalyses Ni-sirohydrochlorin a,c-diamide + 3 AH2 + ATP + H2O = 15,17(3)-seco-F430-17(3)-acid + 3 A + ADP + phosphate. Its function is as follows. Involved in the biosynthesis of the unique nickel-containing tetrapyrrole coenzyme F430, the prosthetic group of methyl-coenzyme M reductase (MCR), which plays a key role in methanogenesis and anaerobic methane oxidation. Catalyzes both the six-electron reduction of the tetrahydroporphyrin ring system and the gamma-lactamization of the c-acetamide side chain of Ni-sirohydrochlorin a,c-diamide to yield 15,17(3)-seco-F430-17(3)-acid (seco-F430), the last intermediate in the biosynthesis of the coenzyme F430. This chain is Ni-sirohydrochlorin a,c-diamide reductive cyclase complex, component CfbD, found in Methanosarcina acetivorans (strain ATCC 35395 / DSM 2834 / JCM 12185 / C2A).